We begin with the raw amino-acid sequence, 212 residues long: Imidazole glycerol phosphate synthase subunit HisH 2 (212 aa).

The 210-residue stretch at 3–212 (RVAIIDYGIN…LMSNFLQWNP (210 aa)) folds into the Glutamine amidotransferase type-1 domain. The Nucleophile role is filled by Cys82. Catalysis depends on residues His192 and Glu194.

In terms of assembly, heterodimer of HisH and HisF.

Its subcellular location is the cytoplasm. It catalyses the reaction 5-[(5-phospho-1-deoxy-D-ribulos-1-ylimino)methylamino]-1-(5-phospho-beta-D-ribosyl)imidazole-4-carboxamide + L-glutamine = D-erythro-1-(imidazol-4-yl)glycerol 3-phosphate + 5-amino-1-(5-phospho-beta-D-ribosyl)imidazole-4-carboxamide + L-glutamate + H(+). The enzyme catalyses L-glutamine + H2O = L-glutamate + NH4(+). It functions in the pathway amino-acid biosynthesis; L-histidine biosynthesis; L-histidine from 5-phospho-alpha-D-ribose 1-diphosphate: step 5/9. IGPS catalyzes the conversion of PRFAR and glutamine to IGP, AICAR and glutamate. The HisH subunit provides the glutamine amidotransferase activity that produces the ammonia necessary to HisF for the synthesis of IGP and AICAR. This is Imidazole glycerol phosphate synthase subunit HisH 2 from Nitrobacter winogradskyi (strain ATCC 25391 / DSM 10237 / CIP 104748 / NCIMB 11846 / Nb-255).